The sequence spans 132 residues: Small ribosomal subunit protein uS8 (132 aa).

The protein belongs to the universal ribosomal protein uS8 family. As to quaternary structure, part of the 30S ribosomal subunit. Contacts proteins S5 and S12.

Functionally, one of the primary rRNA binding proteins, it binds directly to 16S rRNA central domain where it helps coordinate assembly of the platform of the 30S subunit. The polypeptide is Small ribosomal subunit protein uS8 (Anoxybacillus flavithermus (strain DSM 21510 / WK1)).